The primary structure comprises 364 residues: Fructose-bisphosphate aldolase A (364 aa).

At tyrosine 5 the chain carries Phosphotyrosine. Threonine 9 is modified (phosphothreonine). Phosphoserine is present on residues serine 36 and serine 39. Lysine 42 is modified (N6-acetyllysine; alternate). Lysine 42 is covalently cross-linked (Glycyl lysine isopeptide (Lys-Gly) (interchain with G-Cter in SUMO1); alternate). Lysine 42 participates in a covalent cross-link: Glycyl lysine isopeptide (Lys-Gly) (interchain with G-Cter in SUMO2); alternate. Arginine 43 is a beta-D-fructose 1,6-bisphosphate binding site. Serine 46 bears the Phosphoserine mark. An N6-(2-hydroxyisobutyryl)lysine modification is found at lysine 99. Residue lysine 108 is modified to N6-acetyllysine. Lysine 111 is modified (N6-acetyllysine; alternate). N6-malonyllysine; alternate is present on lysine 111. A Phosphoserine modification is found at serine 132. Lysine 147 is subject to N6-(2-hydroxyisobutyryl)lysine. Glutamate 188 (proton acceptor) is an active-site residue. The active-site Schiff-base intermediate with dihydroxyacetone-P is lysine 230. Residue serine 272 is modified to Phosphoserine. Residues 272–274, serine 301, and arginine 304 contribute to the beta-D-fructose 1,6-bisphosphate site; that span reads SGG. An N6-malonyllysine modification is found at lysine 312. Lysine 330 carries the N6-acetyllysine modification.

The protein belongs to the class I fructose-bisphosphate aldolase family. Homotetramer. Interacts with SNX9 and WAS. Interacts with FBP2; the interaction blocks FBP2 inhibition by physiological concentrations of AMP and reduces inhibition by Ca(2+).

Its subcellular location is the cytoplasm. It is found in the myofibril. It localises to the sarcomere. The protein localises to the i band. The protein resides in the m line. It catalyses the reaction beta-D-fructose 1,6-bisphosphate = D-glyceraldehyde 3-phosphate + dihydroxyacetone phosphate. It participates in carbohydrate degradation; glycolysis; D-glyceraldehyde 3-phosphate and glycerone phosphate from D-glucose: step 4/4. Catalyzes the reversible conversion of beta-D-fructose 1,6-bisphosphate (FBP) into two triose phosphate and plays a key role in glycolysis and gluconeogenesis. In addition, may also function as scaffolding protein. This is Fructose-bisphosphate aldolase A (ALDOA) from Pan troglodytes (Chimpanzee).